Here is a 365-residue protein sequence, read N- to C-terminus: Protein RecA (365 aa).

81-88 lines the ATP pocket; that stretch reads GPESSGKT.

The protein belongs to the RecA family.

The protein resides in the cytoplasm. Its function is as follows. Can catalyze the hydrolysis of ATP in the presence of single-stranded DNA, the ATP-dependent uptake of single-stranded DNA by duplex DNA, and the ATP-dependent hybridization of homologous single-stranded DNAs. It interacts with LexA causing its activation and leading to its autocatalytic cleavage. This Borreliella afzelii (strain PKo) (Borrelia afzelii) protein is Protein RecA.